The chain runs to 429 residues: Autophagy-related protein 18 (429 aa).

7 WD repeats span residues 1–36, 69–114, 139–182, 185–225, 230–269, 309–355, and 367–407; these read MTMN…KSYE, KRQS…LLYT, PLPQ…AINV, AHRS…KLYQ, SIPS…QLQE, KHNG…AWIK, and ANTG…GGEG. The L/FRRG motif signature appears at 226–230; that stretch reads FRRGS. Residues 267-309 form a disordered region; it reads LQETSSANTSSTGRRRSLSSLSQSPEREATEEDNGSSDLASRK.

Belongs to the WD repeat PROPPIN family. Component of the PI(3,5)P2 regulatory complex.

It localises to the preautophagosomal structure membrane. It is found in the vacuole membrane. The protein resides in the endosome membrane. Its function is as follows. The PI(3,5)P2 regulatory complex regulates both the synthesis and turnover of phosphatidylinositol 3,5-bisphosphate (PtdIns(3,5)P2). Necessary for proper vacuole morphology. Plays an important role in osmotically-induced vacuole fragmentation. Required for cytoplasm to vacuole transport (Cvt) vesicle formation, pexophagy and starvation-induced autophagy. Involved in correct ATG9 trafficking to the pre-autophagosomal structure. Might also be involved in premeiotic DNA replication. The chain is Autophagy-related protein 18 (atg18) from Emericella nidulans (strain FGSC A4 / ATCC 38163 / CBS 112.46 / NRRL 194 / M139) (Aspergillus nidulans).